We begin with the raw amino-acid sequence, 538 residues long: CTP synthase (538 aa).

Positions 1–270 (MSRTKFIFVT…DEVVLKTMGM (270 aa)) are amidoligase domain. Ser15 is a CTP binding site. Residue Ser15 coordinates UTP. 16–21 (SLGKGV) serves as a coordination point for ATP. Residue Tyr56 participates in L-glutamine binding. Asp73 provides a ligand contact to ATP. Residues Asp73 and Glu143 each coordinate Mg(2+). CTP-binding positions include 150–152 (DIE), 190–195 (KTKPTQ), and Lys226. UTP is bound by residues 190-195 (KTKPTQ) and Lys226. Residues 295–537 (QIAVVGKYIS…IRASVKYSKK (243 aa)) enclose the Glutamine amidotransferase type-1 domain. Gly357 lines the L-glutamine pocket. The active-site Nucleophile; for glutamine hydrolysis is Cys384. Residues 385-388 (LGMQ), Glu408, and Arg465 contribute to the L-glutamine site. Active-site residues include His510 and Glu512.

It belongs to the CTP synthase family. Homotetramer.

The enzyme catalyses UTP + L-glutamine + ATP + H2O = CTP + L-glutamate + ADP + phosphate + 2 H(+). It catalyses the reaction L-glutamine + H2O = L-glutamate + NH4(+). It carries out the reaction UTP + NH4(+) + ATP = CTP + ADP + phosphate + 2 H(+). It functions in the pathway pyrimidine metabolism; CTP biosynthesis via de novo pathway; CTP from UDP: step 2/2. Its activity is regulated as follows. Allosterically activated by GTP, when glutamine is the substrate; GTP has no effect on the reaction when ammonia is the substrate. The allosteric effector GTP functions by stabilizing the protein conformation that binds the tetrahedral intermediate(s) formed during glutamine hydrolysis. Inhibited by the product CTP, via allosteric rather than competitive inhibition. Functionally, catalyzes the ATP-dependent amination of UTP to CTP with either L-glutamine or ammonia as the source of nitrogen. Regulates intracellular CTP levels through interactions with the four ribonucleotide triphosphates. The sequence is that of CTP synthase from Leptospira interrogans serogroup Icterohaemorrhagiae serovar copenhageni (strain Fiocruz L1-130).